The primary structure comprises 212 residues: Thymidylate kinase (212 aa).

10 to 17 (GLDGAGKT) provides a ligand contact to ATP.

This sequence belongs to the thymidylate kinase family.

The enzyme catalyses dTMP + ATP = dTDP + ADP. In terms of biological role, phosphorylation of dTMP to form dTDP in both de novo and salvage pathways of dTTP synthesis. The chain is Thymidylate kinase from Blochmanniella pennsylvanica (strain BPEN).